The sequence spans 478 residues: Cytochrome c-552 (478 aa).

The first 26 residues, methionine 1–alanine 26, serve as a signal peptide directing secretion. Position 94 (histidine 94) interacts with heme c. Heme is bound by residues cysteine 122, cysteine 125, and lysine 126. Residues cysteine 160, cysteine 163, histidine 164, cysteine 209, cysteine 212, and histidine 213 each contribute to the heme c site. Ca(2+) is bound by residues glutamate 215, tyrosine 216, lysine 261, and glutamine 263. Tyrosine 216 provides a ligand contact to substrate. Histidine 264 is a substrate binding site. Residues histidine 275, cysteine 282, cysteine 285, histidine 286, histidine 301, cysteine 314, cysteine 317, histidine 318, and histidine 393 each contribute to the heme c site.

This sequence belongs to the cytochrome c-552 family. Ca(2+) serves as cofactor. Requires heme c as cofactor.

It localises to the periplasm. The enzyme catalyses 6 Fe(III)-[cytochrome c] + NH4(+) + 2 H2O = 6 Fe(II)-[cytochrome c] + nitrite + 8 H(+). It participates in nitrogen metabolism; nitrate reduction (assimilation). Functionally, catalyzes the reduction of nitrite to ammonia, consuming six electrons in the process. This is Cytochrome c-552 from Citrobacter koseri (strain ATCC BAA-895 / CDC 4225-83 / SGSC4696).